A 194-amino-acid chain; its full sequence is Ribonuclease HII (194 aa).

The RNase H type-2 domain occupies 3–193; it reads ILTAGVDEAG…VRNLFAQQAL (191 aa). A divalent metal cation is bound by residues Asp9, Glu10, and Asp101.

This sequence belongs to the RNase HII family. The cofactor is Mn(2+). It depends on Mg(2+) as a cofactor.

It localises to the cytoplasm. It catalyses the reaction Endonucleolytic cleavage to 5'-phosphomonoester.. Its function is as follows. Endonuclease that specifically degrades the RNA of RNA-DNA hybrids. This is Ribonuclease HII from Neisseria meningitidis serogroup C / serotype 2a (strain ATCC 700532 / DSM 15464 / FAM18).